The chain runs to 132 residues: Small ribosomal subunit protein uS9 (132 aa).

This sequence belongs to the universal ribosomal protein uS9 family.

This Mycoplasma pneumoniae (strain ATCC 29342 / M129 / Subtype 1) (Mycoplasmoides pneumoniae) protein is Small ribosomal subunit protein uS9 (rpsI).